The following is a 243-amino-acid chain: 3-deoxy-manno-octulosonate cytidylyltransferase (243 aa).

This sequence belongs to the KdsB family.

It localises to the cytoplasm. It catalyses the reaction 3-deoxy-alpha-D-manno-oct-2-ulosonate + CTP = CMP-3-deoxy-beta-D-manno-octulosonate + diphosphate. It participates in nucleotide-sugar biosynthesis; CMP-3-deoxy-D-manno-octulosonate biosynthesis; CMP-3-deoxy-D-manno-octulosonate from 3-deoxy-D-manno-octulosonate and CTP: step 1/1. Its pathway is bacterial outer membrane biogenesis; lipopolysaccharide biosynthesis. Activates KDO (a required 8-carbon sugar) for incorporation into bacterial lipopolysaccharide in Gram-negative bacteria. The sequence is that of 3-deoxy-manno-octulosonate cytidylyltransferase from Bartonella quintana (strain Toulouse) (Rochalimaea quintana).